A 432-amino-acid chain; its full sequence is Adenylosuccinate synthetase (432 aa).

GTP-binding positions include 12 to 18 (GDEGKGK) and 40 to 42 (GHT). The active-site Proton acceptor is the D13. Residues D13 and G40 each coordinate Mg(2+). IMP is bound by residues 13 to 16 (DEGK), 38 to 41 (NAGH), T130, R144, Q225, T240, and R304. H41 serves as the catalytic Proton donor. 300-306 (ATTGRRR) provides a ligand contact to substrate. GTP is bound by residues R306, 332–334 (KLD), and 415–417 (SVG).

Belongs to the adenylosuccinate synthetase family. In terms of assembly, homodimer. It depends on Mg(2+) as a cofactor.

The protein resides in the cytoplasm. The enzyme catalyses IMP + L-aspartate + GTP = N(6)-(1,2-dicarboxyethyl)-AMP + GDP + phosphate + 2 H(+). Its pathway is purine metabolism; AMP biosynthesis via de novo pathway; AMP from IMP: step 1/2. Plays an important role in the de novo pathway of purine nucleotide biosynthesis. Catalyzes the first committed step in the biosynthesis of AMP from IMP. The chain is Adenylosuccinate synthetase from Syntrophus aciditrophicus (strain SB).